A 179-amino-acid polypeptide reads, in one-letter code: GTP-dependent dephospho-CoA kinase (179 aa).

GTP contacts are provided by Asp55, Val57, Asp74, Lys76, and Glu128.

This sequence belongs to the GTP-dependent DPCK family.

It carries out the reaction 3'-dephospho-CoA + GTP = GDP + CoA + H(+). It participates in cofactor biosynthesis; coenzyme A biosynthesis. Functionally, catalyzes the GTP-dependent phosphorylation of the 3'-hydroxyl group of dephosphocoenzyme A to form coenzyme A (CoA). In Saccharolobus islandicus (strain M.16.27) (Sulfolobus islandicus), this protein is GTP-dependent dephospho-CoA kinase.